The chain runs to 447 residues: Zinc finger protein ZIC 1 (447 aa).

Residues L225 to H260 form a C2H2-type 1; atypical zinc finger. The C2H2-type 2; atypical zinc-finger motif lies at H269–H296. 3 C2H2-type zinc fingers span residues F302–H326, F332–H356, and Y362–H384. The interval S375–H431 is disordered. Over residues S386–S427 the composition is skewed to low complexity.

The protein belongs to the GLI C2H2-type zinc-finger protein family. As to quaternary structure, interacts (via the C2H2-type domains 3, 4 and 5) with MDFIC (via the C2H2-type domains 3, 4 and 5). Interacts with GLI1; the interaction enhances transcription activation. Interacts with GLI2. Interacts with GLI3; the interaction enhances transcription activation. As to expression, CNS. A high level expression is seen in the cerebellum. Detected in the nuclei of the cerebellar granule cell lineage from the progenitor cells of the external germinal layer to the postmigrated cells of the internal granular layer. Detected in medulloblastoma (26/29 cases), but not present in all other tumors examined.

It localises to the nucleus. It is found in the cytoplasm. Functionally, acts as a transcriptional activator. Involved in neurogenesis. Plays important roles in the early stage of organogenesis of the CNS, as well as during dorsal spinal cord development and maturation of the cerebellum. Involved in the spatial distribution of mossy fiber (MF) neurons within the pontine gray nucleus (PGN). Plays a role in the regulation of MF axon pathway choice. Promotes MF migration towards ipsilaterally-located cerebellar territories. May have a role in shear flow mechanotransduction in osteocytes. Retains nuclear GLI1 and GLI3 in the cytoplasm. Binds to the minimal GLI-consensus sequence 5'-TGGGTGGTC-3'. This is Zinc finger protein ZIC 1 (ZIC1) from Homo sapiens (Human).